The sequence spans 30 residues: Putative cytochrome bd-II ubiquinol oxidase subunit AppX (30 aa).

A helical membrane pass occupies residues 4–24 (LLWFVGILLMCSLSTLVLVWL).

Belongs to the cytochrome ubiquinol oxidase subunit X family. As to quaternary structure, able to interact with CydA and CydB upon overexpression.

The protein localises to the cell inner membrane. Its function is as follows. Might be part of cytochrome bd-II oxidase (appB and appC). Able to restore reductant resistance to a cydX deletion mutant upon overexpression. CydX and this protein may have some functional overlap. The chain is Putative cytochrome bd-II ubiquinol oxidase subunit AppX (appX) from Escherichia coli (strain K12).